The primary structure comprises 544 residues: Chaperonin GroEL (544 aa).

Residues 29–32 (TIGP), 86–90 (DGTTT), Gly413, 478–480 (NAA), and Asp494 each bind ATP.

Belongs to the chaperonin (HSP60) family. Forms a cylinder of 14 subunits composed of two heptameric rings stacked back-to-back. Interacts with the co-chaperonin GroES.

It is found in the cytoplasm. The enzyme catalyses ATP + H2O + a folded polypeptide = ADP + phosphate + an unfolded polypeptide.. Functionally, together with its co-chaperonin GroES, plays an essential role in assisting protein folding. The GroEL-GroES system forms a nano-cage that allows encapsulation of the non-native substrate proteins and provides a physical environment optimized to promote and accelerate protein folding. This is Chaperonin GroEL from Exiguobacterium sp. (strain ATCC BAA-1283 / AT1b).